The primary structure comprises 176 residues: NAD(P)H-quinone oxidoreductase subunit 6, chloroplastic (176 aa).

5 consecutive transmembrane segments (helical) span residues 10–30, 33–53, 60–80, 95–115, and 152–172; these read ILML…VLLT, IYSA…YFLL, VAQL…AVMF, IGDG…MTTI, and FYLP…GAIT.

This sequence belongs to the complex I subunit 6 family. NDH is composed of at least 16 different subunits, 5 of which are encoded in the nucleus.

Its subcellular location is the plastid. The protein localises to the chloroplast thylakoid membrane. The catalysed reaction is a plastoquinone + NADH + (n+1) H(+)(in) = a plastoquinol + NAD(+) + n H(+)(out). It catalyses the reaction a plastoquinone + NADPH + (n+1) H(+)(in) = a plastoquinol + NADP(+) + n H(+)(out). Functionally, NDH shuttles electrons from NAD(P)H:plastoquinone, via FMN and iron-sulfur (Fe-S) centers, to quinones in the photosynthetic chain and possibly in a chloroplast respiratory chain. The immediate electron acceptor for the enzyme in this species is believed to be plastoquinone. Couples the redox reaction to proton translocation, and thus conserves the redox energy in a proton gradient. In Lolium perenne (Perennial ryegrass), this protein is NAD(P)H-quinone oxidoreductase subunit 6, chloroplastic (ndhG).